The primary structure comprises 145 residues: Peptide methionine sulfoxide reductase MsrB (145 aa).

Residues 6–129 form the MsrB domain; the sequence is KNERLQQLTD…NSAALRFIPV (124 aa). The Nucleophile role is filled by Cys118.

It belongs to the MsrB Met sulfoxide reductase family.

The enzyme catalyses L-methionyl-[protein] + [thioredoxin]-disulfide + H2O = L-methionyl-(R)-S-oxide-[protein] + [thioredoxin]-dithiol. In Listeria monocytogenes serotype 4b (strain CLIP80459), this protein is Peptide methionine sulfoxide reductase MsrB.